Here is a 491-residue protein sequence, read N- to C-terminus: Ribonuclease G (491 aa).

One can recognise an S1 motif domain in the interval 40–129 (GNIYKGRVTR…LTTDITLPSR (90 aa)). Mg(2+)-binding residues include aspartate 305 and aspartate 348.

This sequence belongs to the RNase E/G family. RNase G subfamily. Homodimer, in equilibrium with possible higher multimers. Requires Mg(2+) as cofactor.

The protein localises to the cytoplasm. In terms of biological role, an endonuclease that acts in the processing of the 5'-end of 16S rRNA and 23S rRNA. It prefers 5'-monophosphorylated substrates and cleaves single-stranded sites rich in A and U residues; contributes to tRNA processing and mRNA turnover. This Haemophilus influenzae (strain ATCC 51907 / DSM 11121 / KW20 / Rd) protein is Ribonuclease G (rng).